The chain runs to 199 residues: NAD(P)H dehydrogenase (quinone) (199 aa).

Residues Val4–Ile190 enclose the Flavodoxin-like domain. FMN is bound by residues Ser10–Ile15 and Thr78–Phe80. Residue Tyr12 participates in NAD(+) binding. Substrate is bound at residue Trp98. FMN contacts are provided by residues Ser113–Gly119 and His134.

Belongs to the WrbA family. FMN serves as cofactor.

It catalyses the reaction a quinone + NADH + H(+) = a quinol + NAD(+). The catalysed reaction is a quinone + NADPH + H(+) = a quinol + NADP(+). In Rhodopseudomonas palustris (strain BisA53), this protein is NAD(P)H dehydrogenase (quinone).